The chain runs to 532 residues: FAD-dependent monooxygenase hkm7 (532 aa).

FAD-binding positions include 191–193 (RIY) and Asp261.

It belongs to the PheA/TfdB FAD monooxygenase family.

The protein operates within secondary metabolite biosynthesis. Functionally, FAD-dependent monooxygenase; part of the gene cluster that mediates the biosynthesis of hancockiamides, an unusual new family of N-cinnamoylated piperazines. The NRPS hkm10 and the NmrA-like reductase hkm9 are proposed to convert two molecules of L-Phe to the intermediary piperazine called xenocockiamide A. Xenocockiamide A is then converted to hancockiamide D via a series of hydroxylations and O-methylations. The tyrosinase hkm6 may catalyze an aromatic hydroxylation, then the 2-oxoglutarate-dependent Fe(II) dioxygenase hkm4 and the FAD-dependent phenol hydroxylase hkm7 may catalyze consecutive hydroxylations to install 2 more hydroxy groups, and the methyltransferase hkm8 probably catalyzes two methylations using 2 molecules of S-adenosyl-L-methionine (SAM). The NRPS hkm11 activates and transfers trans-cinnamate supplied by the PAL hkm12 to hancockiamide D and produces hancockiamide A. NRPS Hkm11 has the flexibility to tolerate the bulky hancockiamide G as a substrate and the absence of the acetyl-transferase hkm3 opens up the opportunity for hkm11 to introduce a second N-cinnamoyl moiety. The cytochrome P450 monooxygenase hkm5 catalyzes the methylenedioxy bridge formation, converting hancockiamide A into hancockiamide G. Hkm5 can also convert hancockiamide B into hancockiamide C, and hancockiamide D into hancockiamide H. The N-acetyltransferase hkm3 finally transfers an acetyl group to 1-N of piperazine, converting hancockiamide A into hancockiamide B and hancockiamide G into hancockiamide C. This chain is FAD-dependent monooxygenase hkm7, found in Aspergillus hancockii.